A 453-amino-acid polypeptide reads, in one-letter code: Carbamoyl phosphate synthase arginine-specific small chain (453 aa).

The transit peptide at 1-33 directs the protein to the mitochondrion; that stretch reads MFSRLAARLPKASALNGVAARQVRNLSQPAITG. The disordered stretch occupies residues 26-50; it reads LSQPAITGSKGRNMPAREPRTTAAA. Ser97, Gly280, and Gly282 together coordinate L-glutamine. A Glutamine amidotransferase type-1 domain is found at 233-420; the sequence is HVALIDCGVK…MENVELFKSN (188 aa). Cys309 functions as the Nucleophile in the catalytic mechanism. L-glutamine contacts are provided by Leu310, Gln313, Asn351, Gly353, and Tyr354. Residues His393 and Glu395 contribute to the active site.

The protein belongs to the CarA family. As to quaternary structure, heterodimer composed of 2 chains; the small (or glutamine) chain promotes the hydrolysis of glutamine to ammonia, which is used by the large (or ammonia) chain to synthesize carbamoyl phosphate.

Its subcellular location is the mitochondrion matrix. The enzyme catalyses hydrogencarbonate + L-glutamine + 2 ATP + H2O = carbamoyl phosphate + L-glutamate + 2 ADP + phosphate + 2 H(+). The catalysed reaction is L-glutamine + H2O = L-glutamate + NH4(+). The protein operates within amino-acid biosynthesis; L-arginine biosynthesis; carbamoyl phosphate from bicarbonate: step 1/1. Functionally, small subunit of the arginine-specific carbamoyl phosphate synthase (CPSase). CPSase catalyzes the formation of carbamoyl phosphate from the ammonia moiety of glutamine, carbonate, and phosphate donated by ATP, the first step of the arginine biosynthetic pathway. The small subunit (glutamine amidotransferase) binds and cleaves glutamine to supply the large subunit with the substrate ammonia. This Neurospora crassa (strain ATCC 24698 / 74-OR23-1A / CBS 708.71 / DSM 1257 / FGSC 987) protein is Carbamoyl phosphate synthase arginine-specific small chain (arg-2).